Here is a 506-residue protein sequence, read N- to C-terminus: Maturase K (506 aa).

It belongs to the intron maturase 2 family. MatK subfamily.

The protein resides in the plastid. Its subcellular location is the chloroplast. Functionally, usually encoded in the trnK tRNA gene intron. Probably assists in splicing its own and other chloroplast group II introns. The protein is Maturase K of Trifolium microcephalum (Small-head clover).